Here is a 451-residue protein sequence, read N- to C-terminus: NADH-quinone oxidoreductase subunit H (451 aa).

A run of 9 helical transmembrane segments spans residues 30–50 (LIIV…LFMI), 98–118 (AVFI…FAVI), 138–158 (LPVA…GIVL), 176–196 (AAQV…VFLY), 213–233 (WGIL…VGET), 262–282 (LFYL…TTLF), 302–322 (WWPV…FIWL), 336–356 (QFGW…EAAI), and 368–388 (VIPF…ADLV).

This sequence belongs to the complex I subunit 1 family. As to quaternary structure, NDH-1 is composed of 14 different subunits. Subunits NuoA, H, J, K, L, M, N constitute the membrane sector of the complex.

The protein localises to the cell membrane. The enzyme catalyses a quinone + NADH + 5 H(+)(in) = a quinol + NAD(+) + 4 H(+)(out). In terms of biological role, NDH-1 shuttles electrons from NADH, via FMN and iron-sulfur (Fe-S) centers, to quinones in the respiratory chain. The immediate electron acceptor for the enzyme in this species is believed to be ubiquinone. Couples the redox reaction to proton translocation (for every two electrons transferred, four hydrogen ions are translocated across the cytoplasmic membrane), and thus conserves the redox energy in a proton gradient. This subunit may bind ubiquinone. In Acidothermus cellulolyticus (strain ATCC 43068 / DSM 8971 / 11B), this protein is NADH-quinone oxidoreductase subunit H.